Reading from the N-terminus, the 295-residue chain is 4-diphosphocytidyl-2-C-methyl-D-erythritol kinase (295 aa).

Residue Lys22 is part of the active site. 106-116 (PAGGGFGGGSS) lines the ATP pocket. Asp148 is a catalytic residue.

It belongs to the GHMP kinase family. IspE subfamily.

The catalysed reaction is 4-CDP-2-C-methyl-D-erythritol + ATP = 4-CDP-2-C-methyl-D-erythritol 2-phosphate + ADP + H(+). Its pathway is isoprenoid biosynthesis; isopentenyl diphosphate biosynthesis via DXP pathway; isopentenyl diphosphate from 1-deoxy-D-xylulose 5-phosphate: step 3/6. Catalyzes the phosphorylation of the position 2 hydroxy group of 4-diphosphocytidyl-2C-methyl-D-erythritol. The chain is 4-diphosphocytidyl-2-C-methyl-D-erythritol kinase from Xanthomonas euvesicatoria pv. vesicatoria (strain 85-10) (Xanthomonas campestris pv. vesicatoria).